The chain runs to 358 residues: Neutral protease 2 homolog PABG_02362 (358 aa).

The first 19 residues, 1–19 (MRRVSGILAVAAFTISAFA), serve as a signal peptide directing secretion. Residues 20-182 (GVIQPVAKDA…FAAMNQFVKI (163 aa)) constitute a propeptide that is removed on maturation. Cystine bridges form between C188–C259 and C266–C284. N249 carries an N-linked (GlcNAc...) asparagine glycan. H309 provides a ligand contact to Zn(2+). Residue E310 is part of the active site. Positions 313 and 324 each coordinate Zn(2+).

The protein belongs to the peptidase M35 family. Zn(2+) is required as a cofactor.

It is found in the secreted. It catalyses the reaction Preferential cleavage of bonds with hydrophobic residues in P1'. Also 3-Asn-|-Gln-4 and 8-Gly-|-Ser-9 bonds in insulin B chain.. Functionally, secreted metalloproteinase that allows assimilation of proteinaceous substrates. Shows high activities on basic nuclear substrates such as histone and protamine. This is Neutral protease 2 homolog PABG_02362 from Paracoccidioides brasiliensis (strain Pb03).